Here is a 110-residue protein sequence, read N- to C-terminus: Insulin-2 (110 aa).

The N-terminal stretch at 1 to 24 is a signal peptide; the sequence is MALWIRFLPLLALLILWEPRPAQA. 3 disulfide bridges follow: C31-C96, C43-C109, and C95-C100. The propeptide at 57 to 87 is c peptide; the sequence is EVEDPQVAQLELGGGPGAGDLQTLALEVARQ.

It belongs to the insulin family. As to quaternary structure, heterodimer of a B chain and an A chain linked by two disulfide bonds.

It is found in the secreted. Functionally, insulin decreases blood glucose concentration. It increases cell permeability to monosaccharides, amino acids and fatty acids. It accelerates glycolysis, the pentose phosphate cycle, and glycogen synthesis in liver. The sequence is that of Insulin-2 (Ins2) from Rattus norvegicus (Rat).